We begin with the raw amino-acid sequence, 509 residues long: Dihydrolipoyl dehydrogenase, mitochondrial (509 aa).

The N-terminal 35 residues, 1 to 35 (MQSWSRVYCSLAKRGHFNRISHGLQGLSAVPLRTY), are a transit peptide targeting the mitochondrion. N6-acetyllysine; alternate is present on lysine 66. Lysine 66 carries the post-translational modification N6-succinyllysine; alternate. Residues 71-80 (EKNETLGGTC) and lysine 89 each bind FAD. An intrachain disulfide couples cysteine 80 to cysteine 85. An N6-acetyllysine; alternate mark is found at lysine 104, lysine 122, lysine 132, and lysine 143. N6-succinyllysine; alternate is present on residues lysine 104, lysine 122, lysine 132, and lysine 143. Glycine 154 contacts FAD. N6-succinyllysine is present on residues lysine 159 and lysine 166. 183 to 185 (TGS) is a binding site for FAD. NAD(+) contacts are provided by residues 220-227 (GAGVIGVE) and glutamate 243. Residues lysine 273 and lysine 277 each carry the N6-succinyllysine modification. Valine 278 lines the NAD(+) pocket. A phosphoserine mark is found at serine 285 and serine 297. Position 314 (glycine 314) interacts with NAD(+). Lysine 346 is modified (N6-acetyllysine). FAD contacts are provided by residues aspartate 355 and 361-364 (MLAH). Lysine 410 bears the N6-acetyllysine; alternate mark. Lysine 410 carries the post-translational modification N6-succinyllysine; alternate. 2 positions are modified to N6-acetyllysine: lysine 417 and lysine 420. Lysine 430 is subject to N6-succinyllysine. Histidine 487 serves as the catalytic Proton acceptor. Position 502 is a phosphoserine (serine 502). Position 505 is an N6-acetyllysine; alternate (lysine 505). At lysine 505 the chain carries N6-succinyllysine; alternate.

This sequence belongs to the class-I pyridine nucleotide-disulfide oxidoreductase family. In terms of assembly, homodimer. Part of the multimeric pyruvate dehydrogenase complex that contains multiple copies of pyruvate dehydrogenase (subunits PDHA (PDHA1 or PDHA2) and PDHB, E1), dihydrolipoamide acetyltransferase (DLAT, E2) and lipoamide dehydrogenase (DLD, E3). These subunits are bound to an inner core composed of about 48 DLAT and 12 PDHX molecules (by non covalent bonds). The 2-oxoglutarate dehydrogenase complex is composed of OGDH (2-oxoglutarate dehydrogenase; E1), DLST (dihydrolipoamide succinyltransferase; E2), DLD (dihydrolipoamide dehydrogenase; E3) and the assembly factor KGD4. It contains multiple copies of the three enzymatic components (E1, E2 and E3). In the nucleus, the 2-oxoglutarate dehydrogenase complex associates with KAT2A. Interacts with PDHX. FAD is required as a cofactor. Tyrosine phosphorylated.

It is found in the mitochondrion matrix. It localises to the nucleus. The protein localises to the cell projection. Its subcellular location is the cilium. The protein resides in the flagellum. It is found in the cytoplasmic vesicle. It localises to the secretory vesicle. The protein localises to the acrosome. The enzyme catalyses N(6)-[(R)-dihydrolipoyl]-L-lysyl-[protein] + NAD(+) = N(6)-[(R)-lipoyl]-L-lysyl-[protein] + NADH + H(+). Disruption of native heterodimer state inhibits primary dihydrolipoamide dehydrogenase activity and induces serine protease activity. Lipoamide dehydrogenase is a component of the glycine cleavage system as well as an E3 component of three alpha-ketoacid dehydrogenase complexes (pyruvate-, alpha-ketoglutarate-, and branched-chain amino acid-dehydrogenase complex). The 2-oxoglutarate dehydrogenase complex is mainly active in the mitochondrion. A fraction of the 2-oxoglutarate dehydrogenase complex also localizes in the nucleus and is required for lysine succinylation of histones: associates with KAT2A on chromatin and provides succinyl-CoA to histone succinyltransferase KAT2A. In monomeric form may have additional moonlighting function as serine protease. Involved in the hyperactivation of spermatazoa during capacitation and in the spermatazoal acrosome reaction. The polypeptide is Dihydrolipoyl dehydrogenase, mitochondrial (DLD) (Homo sapiens (Human)).